The chain runs to 339 residues: Probable G-protein coupled receptor 33 (339 aa).

The Extracellular portion of the chain corresponds to 1–30; it reads MDRVNSSGHVISVSPSLTNSTGVPTPAPKA. 2 N-linked (GlcNAc...) asparagine glycosylation sites follow: N5 and N19. A helical membrane pass occupies residues 31 to 53; the sequence is IIAAALFMSFIVGTISNGLYLWM. Topologically, residues 54–64 are cytoplasmic; that stretch reads LKFKMQRTVNT. Residues 65–86 traverse the membrane as a helical segment; it reads LLFFHLILSYFISTLILPFMAT. Topologically, residues 87–103 are extracellular; that stretch reads SFLQDNHWAFGSVLCKV. Cysteines 101 and 179 form a disulfide. The chain crosses the membrane as a helical span at residues 104 to 124; that stretch reads FNSTLSVSMFASVFFLSAISV. At 125–143 the chain is on the cytoplasmic side; sequence DRYHLTLHPVWSQQHRTPR. A helical membrane pass occupies residues 144 to 165; the sequence is WASRIALRIWILATILSIPYLV. Residues 166–209 lie on the Extracellular side of the membrane; the sequence is FRETHDDHKGRIKCQNNYIVGTNWESSEHQTLGQWIHAACFGRR. Residues 210 to 230 traverse the membrane as a helical segment; sequence FLLGFLLPFLVIVFCYKRVAT. Residues 231–246 lie on the Cytoplasmic side of the membrane; the sequence is KMKDKGLFKSSKPFKV. A helical transmembrane segment spans residues 247-268; sequence MLTAVVSFFVCWMPYHVHSGLV. At 269–283 the chain is on the extracellular side; that stretch reads LTKSQPLPSQLTLGL. A helical transmembrane segment spans residues 284-303; the sequence is AVVTISFNTVVSPILYLFTG. The Cytoplasmic segment spans residues 304-339; the sequence is ENFEVFKKSILALFKSTFSDSSATERTQTLNSETEI.

The protein belongs to the G-protein coupled receptor 1 family.

It is found in the cell membrane. Functionally, orphan receptor; could be a chemoattractant receptor. This is Probable G-protein coupled receptor 33 (Gpr33) from Rattus rattus (Black rat).